We begin with the raw amino-acid sequence, 357 residues long: UPF0283 membrane protein HS_0596 (357 aa).

Transmembrane regions (helical) follow at residues 67–87 (LMAT…QWLV), 96–116 (IAFV…GAII), and 213–233 (AVES…MFFI).

This sequence belongs to the UPF0283 family.

It localises to the cell inner membrane. This Histophilus somni (strain 129Pt) (Haemophilus somnus) protein is UPF0283 membrane protein HS_0596.